The following is a 1240-amino-acid chain: RNA-directed RNA polymerase VP2 (1240 aa).

Residues 516-764 enclose the RdRp catalytic domain; sequence LVANYINKHM…KLYALFGARI (249 aa).

The protein belongs to the reoviridae RNA-directed RNA polymerase family.

The protein localises to the virion. It catalyses the reaction RNA(n) + a ribonucleoside 5'-triphosphate = RNA(n+1) + diphosphate. Functionally, RNA-directed RNA polymerase that is involved in transcription and genome replication. Following infection, it catalyzes the synthesis of fully conservative plus strands. After core assembly, which consists in recruitment of one capped plus-strand for each genomic segments and polymerase complexes, the polymerase switches mode and catalyzes the synthesis of complementary minus-strands. This Oncorhynchus keta (Chum salmon) protein is RNA-directed RNA polymerase VP2 (S2).